The sequence spans 115 residues: Pro-neuregulin-4, membrane-bound isoform (115 aa).

The Extracellular segment spans residues 1-62 (MPTDHEEPCG…SSIQTKSNLF (62 aa)). The EGF-like domain occupies 5 to 46 (HEEPCGPSHKSFCLNGGLCYVIPTIPSPFCRCVENYTGARCE). Cystine bridges form between Cys9–Cys23, Cys17–Cys34, and Cys36–Cys45. The N-linked (GlcNAc...) asparagine glycan is linked to Asn39. The helical transmembrane segment at 63–83 (EAFVALAVLVTLIIGAFYFLC) threads the bilayer. Topologically, residues 84 to 115 (RKGHFQRASSVQYDINLVETSSTSAHHSHEQH) are cytoplasmic.

It belongs to the neuregulin family. In terms of assembly, interacts with ERBB4. Proteolytic cleavage close to the plasma membrane on the external face leads to the release of the soluble growth factor form. In terms of processing, extensive glycosylation precedes the proteolytic cleavage.

Its subcellular location is the cell membrane. It is found in the secreted. Low affinity ligand for the ERBB4 tyrosine kinase receptor. Concomitantly recruits ERBB1 and ERBB2 coreceptors, resulting in ligand-stimulated tyrosine phosphorylation and activation of the ERBB receptors. Does not bind to the ERBB1, ERBB2 and ERBB3 receptors. The polypeptide is Pro-neuregulin-4, membrane-bound isoform (NRG4) (Homo sapiens (Human)).